Here is a 627-residue protein sequence, read N- to C-terminus: tRNA uridine 5-carboxymethylaminomethyl modification enzyme MnmG (627 aa).

Residues 13 to 18 (GGGHAG), Val125, and Ser180 each bind FAD. Residue 274-288 (GPRYCPSIEDKVVRF) coordinates NAD(+). FAD is bound at residue Gln371.

This sequence belongs to the MnmG family. In terms of assembly, homodimer. Heterotetramer of two MnmE and two MnmG subunits. It depends on FAD as a cofactor.

It is found in the cytoplasm. In terms of biological role, NAD-binding protein involved in the addition of a carboxymethylaminomethyl (cmnm) group at the wobble position (U34) of certain tRNAs, forming tRNA-cmnm(5)s(2)U34. The protein is tRNA uridine 5-carboxymethylaminomethyl modification enzyme MnmG of Francisella tularensis subsp. novicida (strain U112).